The primary structure comprises 142 residues: MKTFTAKLENIRRNWYIMDASNKILGRFASNIALRLRGKHKVIYTPHIDTGDYIIVLNAKKITVTGNKLSDKKYYHYTGFVGGIKEQNLKDLMTKRPEYVIERAVKGMLPKGALGKAMLKKLKVYAGTEHQHAAQQPQVLEI.

It belongs to the universal ribosomal protein uL13 family. Part of the 50S ribosomal subunit.

This protein is one of the early assembly proteins of the 50S ribosomal subunit, although it is not seen to bind rRNA by itself. It is important during the early stages of 50S assembly. In Baumannia cicadellinicola subsp. Homalodisca coagulata, this protein is Large ribosomal subunit protein uL13.